The chain runs to 75 residues: Defensin-like protein 59 (75 aa).

Positions 1 to 19 (MNITKSYVVIFFLVMLTNS) are cleaved as a signal peptide. Disulfide bonds link Cys39–Cys73, Cys43–Cys66, Cys52–Cys71, and Cys56–Cys72.

The protein belongs to the DEFL family.

Its subcellular location is the secreted. In Arabidopsis thaliana (Mouse-ear cress), this protein is Defensin-like protein 59.